A 342-amino-acid polypeptide reads, in one-letter code: MEEELKNFIKLWISAIISISYCYYLSTGIKAGVFRLLSVLPVCALFLVFPLFFSYVHFSGCMAFFLSWLANFKLILFSFDQGPLSPLPRTLSRFICITCFPIKPQQNPNIQNYKIPIWLFAIKVVIFVVLLQMYEYKQYLSPALLLVFNSLHIFLELEIVFMLVKALVFITLGCDLEPQSNEPYLATSLQDFWGRRWNLMVPAILRPAVYLPARRMACRKVNSDQAMFLGVFAAFLVSGAVHEMLFFYLTREVPTGEVTWFFLLHGVCTVAEVAVKKSTFVRRWWRVSPTVSRLLTVGFVVVTSGWFFFPLIRSGIIERLASEALMCIDFVKHKFLLLLLGD.

8 consecutive transmembrane segments (helical) span residues Ile-9–Ile-29, Leu-36–Val-56, Phe-58–Ser-78, Ile-115–Glu-135, Ile-153–Gly-173, Met-227–Phe-247, Thr-255–Val-275, and Val-297–Ile-317.

The protein belongs to the wax synthase family.

The protein localises to the membrane. It catalyses the reaction a long chain fatty alcohol + a fatty acyl-CoA = a wax ester + CoA. Catalyzes the final step in the synthesis of long-chain linear esters (waxes). This Arabidopsis thaliana (Mouse-ear cress) protein is Probable long-chain-alcohol O-fatty-acyltransferase 3 (AT3).